Here is a 297-residue protein sequence, read N- to C-terminus: N-acetylmuramic acid 6-phosphate etherase (297 aa).

Residues 55–218 (AAAALKAGGR…STGAMVKLGK (164 aa)) form the SIS domain. Residue glutamate 83 is the Proton donor of the active site. The active site involves glutamate 114.

Belongs to the GCKR-like family. MurNAc-6-P etherase subfamily. Homodimer.

The catalysed reaction is N-acetyl-D-muramate 6-phosphate + H2O = N-acetyl-D-glucosamine 6-phosphate + (R)-lactate. The protein operates within amino-sugar metabolism; 1,6-anhydro-N-acetylmuramate degradation. It functions in the pathway amino-sugar metabolism; N-acetylmuramate degradation. It participates in cell wall biogenesis; peptidoglycan recycling. Its function is as follows. Specifically catalyzes the cleavage of the D-lactyl ether substituent of MurNAc 6-phosphate, producing GlcNAc 6-phosphate and D-lactate. Together with AnmK, is also required for the utilization of anhydro-N-acetylmuramic acid (anhMurNAc) either imported from the medium or derived from its own cell wall murein, and thus plays a role in cell wall recycling. The protein is N-acetylmuramic acid 6-phosphate etherase of Serratia proteamaculans (strain 568).